Consider the following 188-residue polypeptide: Ribosome-recycling factor (188 aa).

Belongs to the RRF family.

The protein localises to the cytoplasm. Functionally, responsible for the release of ribosomes from messenger RNA at the termination of protein biosynthesis. May increase the efficiency of translation by recycling ribosomes from one round of translation to another. This chain is Ribosome-recycling factor, found in Anaeromyxobacter dehalogenans (strain 2CP-1 / ATCC BAA-258).